We begin with the raw amino-acid sequence, 327 residues long: Cyclin-A3-3 (327 aa).

It belongs to the cyclin family. Cyclin AB subfamily.

The chain is Cyclin-A3-3 (CYCA3-3) from Arabidopsis thaliana (Mouse-ear cress).